The sequence spans 388 residues: Succinate--CoA ligase [ADP-forming] subunit beta (388 aa).

The ATP-grasp domain maps to 9-244 (KEILRKFGVA…LDEEDPAEIE (236 aa)). ATP is bound by residues Lys46, 53–55 (GRG), Glu99, Ala102, and Glu107. 2 residues coordinate Mg(2+): Asn199 and Asp213. Substrate-binding positions include Asn264 and 321 to 323 (GIM).

This sequence belongs to the succinate/malate CoA ligase beta subunit family. In terms of assembly, heterotetramer of two alpha and two beta subunits. It depends on Mg(2+) as a cofactor.

It carries out the reaction succinate + ATP + CoA = succinyl-CoA + ADP + phosphate. The enzyme catalyses GTP + succinate + CoA = succinyl-CoA + GDP + phosphate. It participates in carbohydrate metabolism; tricarboxylic acid cycle; succinate from succinyl-CoA (ligase route): step 1/1. In terms of biological role, succinyl-CoA synthetase functions in the citric acid cycle (TCA), coupling the hydrolysis of succinyl-CoA to the synthesis of either ATP or GTP and thus represents the only step of substrate-level phosphorylation in the TCA. The beta subunit provides nucleotide specificity of the enzyme and binds the substrate succinate, while the binding sites for coenzyme A and phosphate are found in the alpha subunit. In Burkholderia ambifaria (strain MC40-6), this protein is Succinate--CoA ligase [ADP-forming] subunit beta.